A 468-amino-acid chain; its full sequence is Putative chitinase 1 (468 aa).

The signal sequence occupies residues 1–21; it reads MDFYSSLLPFLILIYLEFCSG. A GH18 domain is found at 22–381; that stretch reads FNRVCYYNGW…MSIIHGLGEY (360 aa). Cysteine 26 and cysteine 51 form a disulfide bridge. Residues 73–74 and 100–103 each bind chitin; these read VF and GGWD. Glutamate 143 acts as the Proton donor in catalysis. Chitin is bound by residues tyrosine 144, 213 to 216, and tryptophan 353; that span reads KMYD. Residues 386-440 adopt a coiled-coil conformation; sequence SDTLEAEREMINKKIRKAAREISYYSDKGNSTMAKKMEDKLNQLKDHLSAVQAHQ.

It belongs to the glycosyl hydrolase 18 family. As to expression, prismatic layer of shell (at protein level). Expressed primarily in the mantle with highest level in the outer epithelium of the mantle edge and lower level in the mantle pallium.

It is found in the secreted. It catalyses the reaction Random endo-hydrolysis of N-acetyl-beta-D-glucosaminide (1-&gt;4)-beta-linkages in chitin and chitodextrins.. The sequence is that of Putative chitinase 1 from Margaritifera margaritifera (Freshwater pearl mussel).